The primary structure comprises 251 residues: Triosephosphate isomerase (251 aa).

Residues Asn10 and Lys12 each contribute to the substrate site. His95 functions as the Electrophile in the catalytic mechanism. The active-site Proton acceptor is the Glu167.

This sequence belongs to the triosephosphate isomerase family. Homodimer.

It carries out the reaction D-glyceraldehyde 3-phosphate = dihydroxyacetone phosphate. The protein operates within carbohydrate biosynthesis; gluconeogenesis. Its pathway is carbohydrate degradation; glycolysis; D-glyceraldehyde 3-phosphate from glycerone phosphate: step 1/1. This Coprinopsis cinerea (strain Okayama-7 / 130 / ATCC MYA-4618 / FGSC 9003) (Inky cap fungus) protein is Triosephosphate isomerase (TPI).